The primary structure comprises 541 residues: Zinc finger protein 513 (541 aa).

The tract at residues 1–118 (MPRRKQSHPQ…GEARGERPGP (118 aa)) is disordered. The segment covering 44 to 55 (LEFEEEEEEDEG) has biased composition (acidic residues). S85 and S96 each carry phosphoserine. A compositionally biased stretch (basic and acidic residues) spans 103–115 (EPARGPGEARGER). 8 consecutive C2H2-type zinc fingers follow at residues 150–172 (YSCR…MQTH), 178–200 (FRCG…TRTH), 206–228 (YRCP…QRTH), 360–382 (FACS…MKTH), 388–410 (FRCA…QRVH), 416–438 (YKCP…GRIH), 444–466 (FRCS…MLRH), and 472–494 (FRCA…QKVH). The disordered stretch occupies residues 492 to 541 (KVHGHGGAGGPGLSAPEGWAPPHSPPSVLSTRGPAALGATGSRALHSDSP).

It belongs to the krueppel C2H2-type zinc-finger protein family. Binds DNA. Can associate with the proximal promoter regions of PAX6 and SP4, and their known targets including ARR3, RHO, OPN1MW2 and OPN1SW. In terms of tissue distribution, widely expressed. In the eye, expression is greatest in the retina and least in the lens and cornea.

The protein resides in the nucleus. Functionally, transcriptional regulator that plays a role in retinal development and maintenance. The polypeptide is Zinc finger protein 513 (Znf513) (Mus musculus (Mouse)).